We begin with the raw amino-acid sequence, 594 residues long: UvrABC system protein C (594 aa).

One can recognise a GIY-YIG domain in the interval 15-92 (DKPGCYQMKN…IQKFQPYYNI (78 aa)). Residues 197–232 (AKIKQSLQTKMQKASEAMEFERAADIRDQIHYIEVT) enclose the UVR domain.

The protein belongs to the UvrC family. Interacts with UvrB in an incision complex.

It localises to the cytoplasm. Functionally, the UvrABC repair system catalyzes the recognition and processing of DNA lesions. UvrC both incises the 5' and 3' sides of the lesion. The N-terminal half is responsible for the 3' incision and the C-terminal half is responsible for the 5' incision. The polypeptide is UvrABC system protein C (Pediococcus pentosaceus (strain ATCC 25745 / CCUG 21536 / LMG 10740 / 183-1w)).